Reading from the N-terminus, the 212-residue chain is Large ribosomal subunit protein bL25 (212 aa).

The tract at residues 1–25 (MSQSTIHKIAVKKRTETGKNENNRL) is disordered. Residues 13–24 (KRTETGKNENNR) are compositionally biased toward basic and acidic residues.

Belongs to the bacterial ribosomal protein bL25 family. CTC subfamily. Part of the 50S ribosomal subunit; part of the 5S rRNA/L5/L18/L25 subcomplex. Contacts the 5S rRNA. Binds to the 5S rRNA independently of L5 and L18.

In terms of biological role, this is one of the proteins that binds to the 5S RNA in the ribosome where it forms part of the central protuberance. The polypeptide is Large ribosomal subunit protein bL25 (Leptospira borgpetersenii serovar Hardjo-bovis (strain L550)).